Here is a 505-residue protein sequence, read N- to C-terminus: Adenylosuccinate synthetase, chloroplastic (505 aa).

A chloroplast-targeting transit peptide spans 1–60; sequence MTTMNISTLRLDSNPITTSTKSTTHRSGALGYNGSYSCRLLQFQKKNKAPSIIVCSTKPL. Residues 92 to 98 and 120 to 122 each bind GTP; these read GDEGKGK and GHT. The Proton acceptor role is filled by Asp-93. Asp-93 and Gly-120 together coordinate Mg(2+). IMP-binding positions include 93-96, 118-121, Thr-210, Arg-224, Gln-304, Thr-319, and Arg-383; these read DEGK and NAGH. Residue His-121 is the Proton donor of the active site. 379–385 lines the substrate pocket; the sequence is TTTGRPR. Residues Arg-385, 411–413, and 494–496 contribute to the GTP site; these read KLD and GVG.

The protein belongs to the adenylosuccinate synthetase family. As to quaternary structure, homodimer. The cofactor is Mg(2+).

It localises to the plastid. The protein localises to the chloroplast. It catalyses the reaction IMP + L-aspartate + GTP = N(6)-(1,2-dicarboxyethyl)-AMP + GDP + phosphate + 2 H(+). Its pathway is purine metabolism; AMP biosynthesis via de novo pathway; AMP from IMP: step 1/2. Plays an important role in the de novo pathway and in the salvage pathway of purine nucleotide biosynthesis. Catalyzes the first committed step in the biosynthesis of AMP from IMP. The chain is Adenylosuccinate synthetase, chloroplastic from Nicotiana tabacum (Common tobacco).